The sequence spans 457 residues: PDZ and LIM domain protein 7 (457 aa).

Residues 1-85 (MDSFKVVLEG…RLSLGLSRAQ (85 aa)) form the PDZ domain. Ser-78 bears the Phosphoserine mark. Disordered regions lie at residues 82–142 (SRAQ…LVPD), 176–226 (TEFM…PWAV), and 239–258 (TSTVLTRHSQPATPTPLQSR). Arg-103 carries the post-translational modification Asymmetric dimethylarginine. The residue at position 111 (Ser-111) is a Phosphoserine. Positions 208–221 (EPWPGPTAPSPTSR) are enriched in pro residues. Ser-247 is modified (phosphoserine). LIM zinc-binding domains are found at residues 280-338 (PVCH…VRYA), 339-398 (PSCA…MFGT), and 399-457 (KCHG…FSHV).

As to quaternary structure, binds via its LIM zinc-binding 3 domain (LIM 3) to endocytic codes of INSR, but not with those of IGF1R, LDLR, TFRC, or EGFR. Interacts with various PKC isoforms through the LIM zinc-binding domains. Binds to RET in a phosphorylation-independent manner via its LIM zinc-binding domain 2 (LIM 2). Probably part of a complex with SHC and the RET dimer. Interacts with TPM2. Interacts with TBX4 and TBX5. Isoform 1 and isoform 2 are expressed ubiquitously, however, isoform 2 predominates in skeletal muscle, isoform 1 is more abundant in lung, spleen, leukocytes and fetal liver.

Its subcellular location is the cytoplasm. It is found in the cytoskeleton. In terms of biological role, may function as a scaffold on which the coordinated assembly of proteins can occur. May play a role as an adapter that, via its PDZ domain, localizes LIM-binding proteins to actin filaments of both skeletal muscle and nonmuscle tissues. Involved in both of the two fundamental mechanisms of bone formation, direct bone formation (e.g. embryonic flat bones mandible and cranium), and endochondral bone formation (e.g. embryonic long bone development). Plays a role during fracture repair. Involved in BMP6 signaling pathway. This Homo sapiens (Human) protein is PDZ and LIM domain protein 7 (PDLIM7).